We begin with the raw amino-acid sequence, 206 residues long: Proteasome subunit beta 2 (206 aa).

The propeptide at 1 to 10 is removed in mature form; by autocatalysis; that stretch reads MLHLKEKLKG. Catalysis depends on threonine 11, which acts as the Nucleophile.

The protein belongs to the peptidase T1B family. In terms of assembly, the 20S proteasome core is composed of 14 alpha and 14 beta subunits that assemble into four stacked heptameric rings, resulting in a barrel-shaped structure. The two inner rings, each composed of seven catalytic beta subunits, are sandwiched by two outer rings, each composed of seven alpha subunits. The catalytic chamber with the active sites is on the inside of the barrel. Has a gated structure, the ends of the cylinder being occluded by the N-termini of the alpha-subunits. Is capped at one or both ends by the proteasome regulatory ATPase, PAN.

It is found in the cytoplasm. The catalysed reaction is Cleavage of peptide bonds with very broad specificity.. With respect to regulation, the formation of the proteasomal ATPase PAN-20S proteasome complex, via the docking of the C-termini of PAN into the intersubunit pockets in the alpha-rings, triggers opening of the gate for substrate entry. Interconversion between the open-gate and close-gate conformations leads to a dynamic regulation of the 20S proteasome proteolysis activity. In terms of biological role, component of the proteasome core, a large protease complex with broad specificity involved in protein degradation. This Pyrococcus furiosus (strain ATCC 43587 / DSM 3638 / JCM 8422 / Vc1) protein is Proteasome subunit beta 2.